The chain runs to 60 residues: MRCLPVFVILLLLIASAPGVDAQPKTKYDVPLASRHDFAKKTPKRLSKPRDCCRRNFLCC.

Residues 1–22 (MRCLPVFVILLLLIASAPGVDA) form the signal peptide. A propeptide spanning residues 23–50 (QPKTKYDVPLASRHDFAKKTPKRLSKPR) is cleaved from the precursor.

The protein belongs to the conotoxin T superfamily. In terms of processing, contains 2 disulfide bonds that can be either 'C1-C3, C2-C4' or 'C1-C4, C2-C3', since these disulfide connectivities have been observed for conotoxins with cysteine framework V (for examples, see AC P0DQQ7 and AC P81755). Expressed by the venom duct.

The protein localises to the secreted. In Conus ventricosus (Mediterranean cone), this protein is Conotoxin VnMRCL-012.